The chain runs to 503 residues: Excitatory amino acid transporter (503 aa).

The Cytoplasmic segment spans residues 1–18; that stretch reads MPPDTRINKEIMVSWIRK. The next 3 helical transmembrane spans lie at 19–39, 59–79, and 96–116; these read NLLL…GFLL, LMHM…ISGL, and TYYM…VLVI. Over 117 to 198 the chain is Extracellular; it reads HPGDPTIKKE…SLDYVKASVE (82 aa). Residues N177 and N187 are each glycosylated (N-linked (GlcNAc...) asparagine). 5 helical membrane-spanning segments follow: residues 199 to 219, 239 to 259, 281 to 301, 369 to 389, and 400 to 420; these read YTSG…GISL, VIMK…FCLI, VTVL…IFFV, AVAA…GQVV, and IGAA…LTAV.

The protein belongs to the dicarboxylate/amino acid:cation symporter (DAACS) (TC 2.A.23) family.

The protein localises to the membrane. Functionally, transports L-glutamate and also L- and D-aspartate. Essential for terminating the postsynaptic action of glutamate by rapidly removing released glutamate from the synaptic cleft. Acts as a symport by cotransporting sodium. The sequence is that of Excitatory amino acid transporter (glt-1) from Caenorhabditis elegans.